A 125-amino-acid polypeptide reads, in one-letter code: Cu-Zn superoxide dismutase-like protein (125 aa).

A disulfide bridge links Cys-52 with Cys-102.

The protein belongs to the Cu-Zn superoxide dismutase family.

The protein resides in the host cytoplasm. Its function is as follows. Virion protein with no enzymatic activity. The polypeptide is Cu-Zn superoxide dismutase-like protein (Mus musculus (Mouse)).